We begin with the raw amino-acid sequence, 412 residues long: Inositol polyphosphate-5-phosphatase A (412 aa).

Cys-409 carries S-farnesyl cysteine lipidation. Residues 410–412 (VVQ) constitute a propeptide, removed in mature form.

The protein belongs to the inositol 1,4,5-trisphosphate 5-phosphatase type I family. Interacts with TASOR. Post-translationally, isoprenylation at Cys-409 is required for localization at the membrane. In terms of tissue distribution, predominantly expressed in heart, brain, and skeletal muscle. In brain; high level in Purkinje cells.

It is found in the cell membrane. The protein localises to the cell projection. It localises to the dendrite. It carries out the reaction 1D-myo-inositol 1,4,5-trisphosphate + H2O = 1D-myo-inositol 1,4-bisphosphate + phosphate. The enzyme catalyses 1D-myo-inositol 1,3,4,5-tetrakisphosphate + H2O = 1D-myo-inositol 1,3,4-trisphosphate + phosphate. Functionally, phosphatase that specifically hydrolyzes the 5-phosphate of inositol 1,4,5-trisphosphate to inositol 1,4-bisphosphate, and inositol 1,3,4,5-tetrasphosphate to inositol 1,3,4-trisphosphate. Plays a crucial role in the survival of cerebellar Purkinje cells. The protein is Inositol polyphosphate-5-phosphatase A of Homo sapiens (Human).